Here is a 245-residue protein sequence, read N- to C-terminus: tRNA1(Val) (adenine(37)-N6)-methyltransferase (245 aa).

The protein belongs to the methyltransferase superfamily. tRNA (adenine-N(6)-)-methyltransferase family.

The protein resides in the cytoplasm. The catalysed reaction is adenosine(37) in tRNA1(Val) + S-adenosyl-L-methionine = N(6)-methyladenosine(37) in tRNA1(Val) + S-adenosyl-L-homocysteine + H(+). In terms of biological role, specifically methylates the adenine in position 37 of tRNA(1)(Val) (anticodon cmo5UAC). The polypeptide is tRNA1(Val) (adenine(37)-N6)-methyltransferase (Escherichia fergusonii (strain ATCC 35469 / DSM 13698 / CCUG 18766 / IAM 14443 / JCM 21226 / LMG 7866 / NBRC 102419 / NCTC 12128 / CDC 0568-73)).